A 105-amino-acid chain; its full sequence is Flagellar transcriptional regulator FlhD (105 aa).

The protein belongs to the FlhD family. In terms of assembly, homodimer; disulfide-linked. Forms a heterohexamer composed of two FlhC and four FlhD subunits. Each FlhC binds a FlhD dimer, forming a heterotrimer, and a hexamer assembles by dimerization of two heterotrimers.

The protein localises to the cytoplasm. Functionally, functions in complex with FlhC as a master transcriptional regulator that regulates transcription of several flagellar and non-flagellar operons by binding to their promoter region. Activates expression of class 2 flagellar genes, including fliA, which is a flagellum-specific sigma factor that turns on the class 3 genes. Also regulates genes whose products function in a variety of physiological pathways. The sequence is that of Flagellar transcriptional regulator FlhD from Cupriavidus necator (strain ATCC 17699 / DSM 428 / KCTC 22496 / NCIMB 10442 / H16 / Stanier 337) (Ralstonia eutropha).